A 107-amino-acid polypeptide reads, in one-letter code: UPF0045 protein in glkA 3'region (107 aa).

The protein belongs to the UPF0045 family.

The sequence is that of UPF0045 protein in glkA 3'region (dglA) from Staphylococcus xylosus.